We begin with the raw amino-acid sequence, 256 residues long: uncharacterized protein (256 aa).

Positions 1–24 (MIKRVNKLVLGISLLFLVISITAG) are cleaved as a signal peptide. C25 carries N-palmitoyl cysteine lipidation. Residue C25 is the site of S-diacylglycerol cysteine attachment.

It belongs to the staphylococcal tandem lipoprotein family.

Its subcellular location is the cell membrane. This is an uncharacterized protein from Staphylococcus aureus.